The following is a 147-amino-acid chain: Large ribosomal subunit protein bL9 (147 aa).

This sequence belongs to the bacterial ribosomal protein bL9 family.

Its function is as follows. Binds to the 23S rRNA. The chain is Large ribosomal subunit protein bL9 from Bdellovibrio bacteriovorus (strain ATCC 15356 / DSM 50701 / NCIMB 9529 / HD100).